The chain runs to 435 residues: 4-hydroxy-3-methylbut-2-en-1-yl diphosphate synthase (flavodoxin) (435 aa).

Over residues 1-15 (MTDVDLRARPQEGMK) the composition is skewed to basic and acidic residues. The segment at 1–24 (MTDVDLRARPQEGMKEIPAGPKGR) is disordered. [4Fe-4S] cluster is bound by residues Cys-316, Cys-319, Cys-362, and Glu-369.

It belongs to the IspG family. [4Fe-4S] cluster is required as a cofactor.

The enzyme catalyses (2E)-4-hydroxy-3-methylbut-2-enyl diphosphate + oxidized [flavodoxin] + H2O + 2 H(+) = 2-C-methyl-D-erythritol 2,4-cyclic diphosphate + reduced [flavodoxin]. It functions in the pathway isoprenoid biosynthesis; isopentenyl diphosphate biosynthesis via DXP pathway; isopentenyl diphosphate from 1-deoxy-D-xylulose 5-phosphate: step 5/6. In terms of biological role, converts 2C-methyl-D-erythritol 2,4-cyclodiphosphate (ME-2,4cPP) into 1-hydroxy-2-methyl-2-(E)-butenyl 4-diphosphate. This chain is 4-hydroxy-3-methylbut-2-en-1-yl diphosphate synthase (flavodoxin), found in Afipia carboxidovorans (strain ATCC 49405 / DSM 1227 / KCTC 32145 / OM5) (Oligotropha carboxidovorans).